Here is a 76-residue protein sequence, read N- to C-terminus: Defensin-like protein 5 (76 aa).

An N-terminal signal peptide occupies residues 1-29 (MKVSPRLNSALLLLFMILATVMGLVTVEA). Disulfide bonds link C32–C76, C43–C63, C49–C70, and C53–C72.

This sequence belongs to the DEFL family.

The protein localises to the secreted. Its function is as follows. Confers broad-spectrum resistance to pathogens. The protein is Defensin-like protein 5 (PDF2.4) of Arabidopsis thaliana (Mouse-ear cress).